The following is a 500-amino-acid chain: Glycerol kinase (500 aa).

Thr-12 serves as a coordination point for ADP. Residues Thr-12, Thr-13, and Ser-14 each contribute to the ATP site. A sn-glycerol 3-phosphate-binding site is contributed by Thr-12. Arg-16 lines the ADP pocket. Sn-glycerol 3-phosphate contacts are provided by Arg-82, Glu-83, Tyr-135, and Asp-245. Residues Arg-82, Glu-83, Tyr-135, Asp-245, and Gln-246 each coordinate glycerol. 2 residues coordinate ADP: Thr-267 and Gly-310. Thr-267, Gly-310, Gln-314, and Gly-411 together coordinate ATP. Gly-411 and Asn-415 together coordinate ADP.

The protein belongs to the FGGY kinase family. As to quaternary structure, homotetramer and homodimer (in equilibrium).

It carries out the reaction glycerol + ATP = sn-glycerol 3-phosphate + ADP + H(+). Its pathway is polyol metabolism; glycerol degradation via glycerol kinase pathway; sn-glycerol 3-phosphate from glycerol: step 1/1. With respect to regulation, activated by phosphorylation and inhibited by fructose 1,6-bisphosphate (FBP). In terms of biological role, key enzyme in the regulation of glycerol uptake and metabolism. Catalyzes the phosphorylation of glycerol to yield sn-glycerol 3-phosphate. This is Glycerol kinase from Clostridium perfringens (strain SM101 / Type A).